The chain runs to 276 residues: Octanoyltransferase LipM (276 aa).

The BPL/LPL catalytic domain maps to 31–246 (GKVPPTVRFY…GFASGLEVEL (216 aa)). Cys148 acts as the Acyl-thioester intermediate in catalysis.

This sequence belongs to the octanoyltransferase LipM family. As to quaternary structure, monomer.

The enzyme catalyses octanoyl-[ACP] + L-lysyl-[protein] = N(6)-octanoyl-L-lysyl-[protein] + holo-[ACP] + H(+). It functions in the pathway protein modification; protein lipoylation via endogenous pathway; protein N(6)-(lipoyl)lysine from octanoyl-[acyl-carrier-protein]. Functionally, catalyzes the transfer of endogenously produced octanoic acid from octanoyl-acyl-carrier-protein onto the lipoyl domain of GcvH, an intermediate carrier during protein lipoylation. In Brevibacillus brevis (strain 47 / JCM 6285 / NBRC 100599), this protein is Octanoyltransferase LipM.